Consider the following 26-residue polypeptide: Dermaseptin-J4 (26 aa).

Val26 carries the post-translational modification Valine amide.

As to expression, expressed by the skin glands.

Its subcellular location is the secreted. Has antimicrobial activity. This Phasmahyla jandaia (Jandaia leaf frog) protein is Dermaseptin-J4.